Consider the following 745-residue polypeptide: Cytoskeleton-associated protein 2-like (745 aa).

The disordered stretch occupies residues 25-141; the sequence is AKGKLKSQNT…GELSRKPVGS (117 aa). Polar residues predominate over residues 30 to 61; sequence KSQNTKPYLKSKNNCQNQPPSKSTIRPKNDVT. A compositionally biased stretch (low complexity) spans 109 to 120; sequence SSNPYSKPSSKS. Positions 121 to 133 are enriched in polar residues; sequence FQQCEAGSSTTGE. Positions 185 to 187 match the KEN box motif; it reads KEN. The span at 192-203 shows a compositional bias: basic and acidic residues; that stretch reads LTEPERKPDPKL. 3 disordered regions span residues 192–217, 256–276, and 385–411; these read LTEP…YNQT, VKSQ…KPSR, and RFNS…NNGF. Lysine 198 is covalently cross-linked (Glycyl lysine isopeptide (Lys-Gly) (interchain with G-Cter in SUMO1); alternate). Lysine 198 is covalently cross-linked (Glycyl lysine isopeptide (Lys-Gly) (interchain with G-Cter in SUMO2); alternate). Tyrosine 204 carries the phosphotyrosine modification. Positions 389–411 are enriched in polar residues; it reads AIPSTPSIRPNGTSGNKHNNNGF. Threonine 742 carries the phosphothreonine modification. Residue serine 745 is modified to Phosphoserine.

It belongs to the CKAP2 family. Post-translationally, ubiquitinated by the anaphase promoting complex/cyclosome (APC/C).

Its subcellular location is the cytoplasm. The protein resides in the cytoskeleton. It localises to the spindle pole. In terms of biological role, microtubule-associated protein required for mitotic spindle formation and cell-cycle progression in neural progenitor cells. The chain is Cytoskeleton-associated protein 2-like (CKAP2L) from Homo sapiens (Human).